We begin with the raw amino-acid sequence, 76 residues long: UPF0291 protein BPUM_1689 (76 aa).

Disordered regions lie at residues M1–K31 and D56–H76. 2 stretches are compositionally biased toward basic and acidic residues: residues E12–K31 and T63–H76.

The protein belongs to the UPF0291 family.

It localises to the cytoplasm. In Bacillus pumilus (strain SAFR-032), this protein is UPF0291 protein BPUM_1689.